The chain runs to 208 residues: Small ribosomal subunit protein uS3 (208 aa).

One can recognise a KH type-2 domain in the interval 16–85; it reads VDEYLKNKLP…KPQIEVKQIE (70 aa).

This sequence belongs to the universal ribosomal protein uS3 family. In terms of assembly, part of the 30S ribosomal subunit.

Its function is as follows. Binds the lower part of the 30S subunit head. The polypeptide is Small ribosomal subunit protein uS3 (Methanococcus aeolicus (strain ATCC BAA-1280 / DSM 17508 / OCM 812 / Nankai-3)).